The following is a 575-amino-acid chain: Transcription factor coe2 (575 aa).

The segment at 63–66 (RKSN) is interaction with DNA. Residues 151-170 (CRVLLTHEVMCSRCCEKKSC) form a C5-type zinc finger. Interaction with DNA stretches follow at residues 197-204 (NCLKTAGN) and 236-239 (NNSK). In terms of domain architecture, IPT/TIG spans 254–336 (PCIKAISPSE…CKGAPGRFIY (83 aa)). A disordered region spans residues 450-487 (IRNTSSISPRGYSSSSTPQQSNYSTPSNSMNGYSNVPM). The span at 454–476 (SSISPRGYSSSSTPQQSNYSTPS) shows a compositional bias: low complexity. Over residues 477–487 (NSMNGYSNVPM) the composition is skewed to polar residues.

The protein belongs to the COE family.

The protein resides in the nucleus. May play a pivotal role in the transcriptional cascade that specifies primary neurons in embryos. Stabilizes the higher neural potential of selected progenitor cells that express neurog2/X-ngnr-1 by maintaining Delta-Notch signaling. Thus ensures the transition between neural competence and irreversible commitment to a neural fate. Also promotes neuronal differentiation by activating neurod1 expression, directly or indirectly. In Xenopus tropicalis (Western clawed frog), this protein is Transcription factor coe2.